The chain runs to 439 residues: Cysteine--tRNA ligase (439 aa).

Position 28 (C28) interacts with Zn(2+). A 'HIGH' region motif is present at residues 30-40 (ITVYDLCHIGH). 3 residues coordinate Zn(2+): C209, H234, and E238. The short motif at 266-270 (KMSKS) is the 'KMSKS' region element. K269 lines the ATP pocket.

Belongs to the class-I aminoacyl-tRNA synthetase family. Monomer. It depends on Zn(2+) as a cofactor.

Its subcellular location is the cytoplasm. The enzyme catalyses tRNA(Cys) + L-cysteine + ATP = L-cysteinyl-tRNA(Cys) + AMP + diphosphate. The protein is Cysteine--tRNA ligase of Shigella boydii serotype 4 (strain Sb227).